A 440-amino-acid polypeptide reads, in one-letter code: Thymidine phosphorylase (440 aa).

The protein belongs to the thymidine/pyrimidine-nucleoside phosphorylase family. In terms of assembly, homodimer.

It carries out the reaction thymidine + phosphate = 2-deoxy-alpha-D-ribose 1-phosphate + thymine. It participates in pyrimidine metabolism; dTMP biosynthesis via salvage pathway; dTMP from thymine: step 1/2. In terms of biological role, the enzymes which catalyze the reversible phosphorolysis of pyrimidine nucleosides are involved in the degradation of these compounds and in their utilization as carbon and energy sources, or in the rescue of pyrimidine bases for nucleotide synthesis. This chain is Thymidine phosphorylase, found in Shigella dysenteriae serotype 1 (strain Sd197).